Here is a 280-residue protein sequence, read N- to C-terminus: Pantothenate synthetase (280 aa).

30–37 is a binding site for ATP; the sequence is MGYLHEGH. The Proton donor role is filled by His-37. (R)-pantoate is bound at residue Gln-61. Residue Gln-61 coordinates beta-alanine. 147 to 150 is a binding site for ATP; sequence GQKD. Gln-153 lines the (R)-pantoate pocket. Residues Val-176 and 184–187 each bind ATP; that span reads MSSR.

It belongs to the pantothenate synthetase family. As to quaternary structure, homodimer.

It is found in the cytoplasm. The catalysed reaction is (R)-pantoate + beta-alanine + ATP = (R)-pantothenate + AMP + diphosphate + H(+). It functions in the pathway cofactor biosynthesis; (R)-pantothenate biosynthesis; (R)-pantothenate from (R)-pantoate and beta-alanine: step 1/1. Catalyzes the condensation of pantoate with beta-alanine in an ATP-dependent reaction via a pantoyl-adenylate intermediate. The chain is Pantothenate synthetase from Fervidobacterium nodosum (strain ATCC 35602 / DSM 5306 / Rt17-B1).